The chain runs to 269 residues: Aquaporin-1 (269 aa).

Residues methionine 1 to tryptophan 11 lie on the Cytoplasmic side of the membrane. The chain crosses the membrane as a helical span at residues arginine 12–isoleucine 29. The Extracellular portion of the chain corresponds to glycine 30–valine 46. Asparagine 42 carries N-linked (GlcNAc...) asparagine glycosylation. Residues glutamine 47–glutamine 65 form a helical membrane-spanning segment. Residues serine 66 to glycine 68 lie on the Cytoplasmic side of the membrane. The stretch at histidine 69–glycine 82 is an intramembrane region. Residues asparagine 76–alanine 78 carry the NPA 1 motif. At leucine 83–serine 90 the chain is on the cytoplasmic side. The helical transmembrane segment at isoleucine 91–serine 109 threads the bilayer. Residues alanine 110–valine 133 are Extracellular-facing. The chain crosses the membrane as a helical span at residues asparagine 134–valine 153. Over leucine 154–aspartate 163 the chain is Cytoplasmic. The helical transmembrane segment at leucine 164–leucine 181 threads the bilayer. Topologically, residues leucine 182–tyrosine 186 are extracellular. The stretch at threonine 187–serine 199 is an intramembrane region. An NPA 2 motif is present at residues asparagine 192 to alanine 194. Topologically, residues alanine 200–phenylalanine 206 are extracellular. An N-linked (GlcNAc...) asparagine glycan is attached at asparagine 205. A helical transmembrane segment spans residues serine 207–valine 224. The Cytoplasmic portion of the chain corresponds to leucine 225–lysine 269. Position 247 is a phosphoserine (serine 247). The residue at position 253 (tyrosine 253) is a Phosphotyrosine. Serine 262 bears the Phosphoserine mark.

Belongs to the MIP/aquaporin (TC 1.A.8) family. Homotetramer; each monomer provides an independent water pore. Component of the ankyrin-1 complex in the erythrocyte, composed of ANK1, RHCE, RHAG, SLC4A1, EPB42, GYPA, GYPB and AQP1. Interacts with EPHB2; involved in endolymph production in the inner ear. Identified in a complex with STOM. Interacts (via the N-terminal) with ANK1 (via ANK 1-5 repeats). Interacts (via the C-terminal) with EPB42. In terms of tissue distribution, erythrocytes and renal tubules.

Its subcellular location is the cell membrane. The enzyme catalyses H2O(in) = H2O(out). It carries out the reaction nitric oxide(out) = nitric oxide(in). It catalyses the reaction CO2(out) = CO2(in). The catalysed reaction is glycerol(in) = glycerol(out). The enzyme catalyses H2O2(out) = H2O2(in). It carries out the reaction K(+)(in) = K(+)(out). It catalyses the reaction Na(+)(in) = Na(+)(out). Forms a water channel that facilitates the transport of water across cell membranes, playing a crucial role in water homeostasis in various tissues. Could also be permeable to small solutes including hydrogen peroxide, glycerol and gases such as amonnia (NH3), nitric oxide (NO) and carbon dioxide (CO2). Recruited to the ankyrin-1 complex, a multiprotein complex of the erythrocyte membrane, it could be part of a CO2 metabolon, linking facilitated diffusion of CO2 across the membrane, anion exchange of Cl(-)/HCO3(-) and interconversion of dissolved CO2 and carbonic acid in the cytosol. In vitro, it shows non-selective gated cation channel activity and may be permeable to cations like K(+) and Na(+) in vivo. The chain is Aquaporin-1 from Rattus norvegicus (Rat).